Here is a 104-residue protein sequence, read N- to C-terminus: 2,4-dinitrotoluene dioxygenase system, ferredoxin component (104 aa).

The segment at 1–21 (MSENWIDAAARDEVPRGRRDR) is disordered. One can recognise a Rieske domain in the interval 5–101 (WIDAAARDEV…VKIENMRVML (97 aa)). [2Fe-2S] cluster is bound by residues C45, H47, C64, and H67.

Belongs to the bacterial ring-hydroxylating dioxygenase ferredoxin component family. The 2,4-dinitrotoluene dioxygenase (DNTDO) multicomponent enzyme system is composed of an electron transfer component and a dioxygenase component (iron sulfur protein (ISP)). The electron transfer component is composed of a ferredoxin reductase (DntAa) and a ferredoxin (DntAb), and the dioxygenase component is formed of a large alpha subunit (DntAc) and a small beta subunit (DntAd). [2Fe-2S] cluster is required as a cofactor.

Functionally, component of the 2,4-dinitrotoluene dioxygenase (DNTDO) multicomponent enzyme system which catalyzes the incorporation of both atoms of molecular oxygen into 2,4-dinitrotoluene (DNT) to form 4-methyl-5-nitrocatechol (MNC) and nitrite. Functions as an intermediate electron transfer protein via a specific interaction with iron sulfur protein components (ISP)(DntAc and DntAd). Also able to convert naphthalene to cis-(1R,2S)-dihydroxy-1,2-dihydronaphthalene. This chain is 2,4-dinitrotoluene dioxygenase system, ferredoxin component, found in Burkholderia sp. (strain RASC).